Reading from the N-terminus, the 209-residue chain is MKTSEWIDISQPLNNDIATWPGDTPFSYEVSWSKEESGSVNVGKLTMSIHTGTHIDAPFHFDNNGKKVLDLDIQVYVGPTRIIDVSNLESIGKKELEKFHLEGVERLLLRTSSHGKANEFPDIIPHLRADIAPFLSEKGIRLIGVDVPSVDPLDDKELAAHHQLFKHGIHILENVVLDHVADGDYELIALPLALSDADGSPVRAVIKPI.

Residue tryptophan 20 coordinates substrate. Histidine 50, histidine 54, and aspartate 56 together coordinate Zn(2+). Histidine 60 serves as the catalytic Proton donor/acceptor. Zn(2+) contacts are provided by histidine 161 and glutamate 173.

Belongs to the Cyclase 1 superfamily. KynB family. Homodimer. Requires Zn(2+) as cofactor.

It catalyses the reaction N-formyl-L-kynurenine + H2O = L-kynurenine + formate + H(+). It functions in the pathway amino-acid degradation; L-tryptophan degradation via kynurenine pathway; L-kynurenine from L-tryptophan: step 2/2. Its function is as follows. Catalyzes the hydrolysis of N-formyl-L-kynurenine to L-kynurenine, the second step in the kynurenine pathway of tryptophan degradation. The polypeptide is Kynurenine formamidase (Bacillus thuringiensis subsp. konkukian (strain 97-27)).